We begin with the raw amino-acid sequence, 365 residues long: 2-aminoethylphosphonate--pyruvate transaminase (365 aa).

An N6-(pyridoxal phosphate)lysine modification is found at K194.

The protein belongs to the class-V pyridoxal-phosphate-dependent aminotransferase family. PhnW subfamily. As to quaternary structure, homodimer. Pyridoxal 5'-phosphate serves as cofactor.

The catalysed reaction is (2-aminoethyl)phosphonate + pyruvate = phosphonoacetaldehyde + L-alanine. In terms of biological role, involved in phosphonate degradation. The protein is 2-aminoethylphosphonate--pyruvate transaminase of Bacillus mycoides (strain KBAB4) (Bacillus weihenstephanensis).